The sequence spans 201 residues: Large ribosomal subunit protein uL4 (201 aa).

The disordered stretch occupies residues 44–71; that stretch reads RAQKTRAEVTGSGKKPWRQKGTGRARSG.

This sequence belongs to the universal ribosomal protein uL4 family. In terms of assembly, part of the 50S ribosomal subunit.

Its function is as follows. One of the primary rRNA binding proteins, this protein initially binds near the 5'-end of the 23S rRNA. It is important during the early stages of 50S assembly. It makes multiple contacts with different domains of the 23S rRNA in the assembled 50S subunit and ribosome. In terms of biological role, forms part of the polypeptide exit tunnel. The polypeptide is Large ribosomal subunit protein uL4 (Pectobacterium carotovorum subsp. carotovorum (strain PC1)).